The sequence spans 109 residues: Sperm-specific class P protein 9/11 (109 aa).

The MSP domain occupies 2 to 109 (SLTADPPACT…TVTIPMSATA (108 aa)).

Expressed at higher level in testis.

This Caenorhabditis elegans protein is Sperm-specific class P protein 9/11 (ssp-9).